A 412-amino-acid chain; its full sequence is Eukaryotic initiation factor 4A-1 (412 aa).

A2 is modified (N-acetylalanine). The Q motif signature appears at E39 to Q67. In terms of domain architecture, Helicase ATP-binding spans I70–I240. A83–T90 provides a ligand contact to ATP. Phosphoserine is present on S104. A Phosphothreonine modification is found at T145. A DEAD box motif is present at residues D188–D191. The region spanning G251–L412 is the Helicase C-terminal domain.

It belongs to the DEAD box helicase family. eIF4A subfamily. EIF4F is a multi-subunit complex, the composition of which varies with external and internal environmental conditions. It is composed of at least EIF4A, EIF4E and EIF4G. Interacts with CDKA-1. Interacts with MRF1, MRF2, MRF3/ECIP1 and MRF4. Highly expressed in the whole plant.

It is found in the cytoplasm. It catalyses the reaction ATP + H2O = ADP + phosphate + H(+). Functionally, ATP-dependent RNA helicase which is a subunit of the eIF4F complex involved in cap recognition and is required for mRNA binding to ribosome. In the current model of translation initiation, eIF4A unwinds RNA secondary structures in the 5'-UTR of mRNAs which is necessary to allow efficient binding of the small ribosomal subunit, and subsequent scanning for the initiator codon. The sequence is that of Eukaryotic initiation factor 4A-1 from Arabidopsis thaliana (Mouse-ear cress).